Consider the following 71-residue polypeptide: Phosphatidylinositol N-acetylglucosaminyltransferase subunit Y (71 aa).

Residues 1 to 5 (MIRSL) lie on the Cytoplasmic side of the membrane. A helical transmembrane segment spans residues 6–26 (PTMTVLIPLVSLAGLLYSASV). At 27 to 44 (EEGFPEGCTSASSLCFYS) the chain is on the lumenal side. The helical transmembrane segment at 45-65 (LLLPVTVPVYVFFHLWTWMGL) threads the bilayer. Residues 66 to 71 (KLFRHN) are Cytoplasmic-facing.

In terms of assembly, component of the glycosylphosphatidylinositol-N-acetylglucosaminyltransferase (GPI-GnT) complex composed at least by PIGA, PIGC, PIGH, PIGP, PIGQ, PIGY and DPM2. Interacts directly with PIGA; this interaction regulates glycosylphosphatidylinositol-N-acetylglucosaminyltransferase activity. Does not interact with Ras proteins.

It localises to the endoplasmic reticulum membrane. Its pathway is glycolipid biosynthesis; glycosylphosphatidylinositol-anchor biosynthesis. Its function is as follows. Part of the glycosylphosphatidylinositol-N-acetylglucosaminyltransferase (GPI-GnT) complex that catalyzes the transfer of N-acetylglucosamine from UDP-N-acetylglucosamine to phosphatidylinositol and participates in the first step of GPI biosynthesis. May act by regulating the catalytic subunit PIGA. This chain is Phosphatidylinositol N-acetylglucosaminyltransferase subunit Y, found in Mus musculus (Mouse).